An 80-amino-acid polypeptide reads, in one-letter code: Ataxin-8 (80 aa).

Specifically found in brains from SCA8 patients (at protein level).

The protein resides in the nucleus. The protein is Ataxin-8 (ATXN8) of Homo sapiens (Human).